Here is a 103-residue protein sequence, read N- to C-terminus: Putative ribosomal RNA-processing protein 7 homolog B (103 aa).

Basic and acidic residues predominate over residues 1 to 19 (MEAYDQKIAEEEAKAKEEE). Residues 1-25 (MEAYDQKIAEEEAKAKEEEGVPDEE) are disordered. The stretch at 71–100 (ESKMEHLAQLRKKFEEDKQRIELLRAQRKF) forms a coiled coil.

This sequence belongs to the RRP7 family.

This chain is Putative ribosomal RNA-processing protein 7 homolog B, found in Homo sapiens (Human).